The following is a 147-amino-acid chain: Phospholipase A2 inhibitor subunit B (147 aa).

The region spanning 62–143 (EICEEAGGHI…DEKLLVVCEF (82 aa)) is the C-type lectin domain. 2 disulfides stabilise this stretch: C64-C141 and C119-C133. N-linked (GlcNAc...) asparagine glycosylation occurs at N103.

The protein belongs to the alpha-type phospholipase A2 inhibitor family. Homo- or heterotrimer; homotrimer of PLI-A chains, two PLI-A and one PLI-B chains, one PLI-A and two PLI-B chains, and homotrimer of PLI-B chains (with a ratio of 1:3:3:1). In terms of tissue distribution, expressed by the liver.

The protein resides in the secreted. Functionally, PLI binds directly phospholipase A2 in the presence or absence of calcium. Inhibitory activity of the PLI-B homotrimer is less specific than that of the PLI-A homotrimer. This chain is Phospholipase A2 inhibitor subunit B, found in Protobothrops flavoviridis (Habu).